The sequence spans 275 residues: Light-independent protochlorophyllide reductase iron-sulfur ATP-binding protein (275 aa).

ATP contacts are provided by residues 12–17 (GIGKST) and K41. S16 lines the Mg(2+) pocket. 2 residues coordinate [4Fe-4S] cluster: C97 and C131. 182–183 (NR) serves as a coordination point for ATP.

Belongs to the NifH/BchL/ChlL family. As to quaternary structure, homodimer. Protochlorophyllide reductase is composed of three subunits; BchL, BchN and BchB. [4Fe-4S] cluster serves as cofactor.

The enzyme catalyses chlorophyllide a + oxidized 2[4Fe-4S]-[ferredoxin] + 2 ADP + 2 phosphate = protochlorophyllide a + reduced 2[4Fe-4S]-[ferredoxin] + 2 ATP + 2 H2O. It functions in the pathway porphyrin-containing compound metabolism; bacteriochlorophyll biosynthesis (light-independent). Component of the dark-operative protochlorophyllide reductase (DPOR) that uses Mg-ATP and reduced ferredoxin to reduce ring D of protochlorophyllide (Pchlide) to form chlorophyllide a (Chlide). This reaction is light-independent. The L component serves as a unique electron donor to the NB-component of the complex, and binds Mg-ATP. The protein is Light-independent protochlorophyllide reductase iron-sulfur ATP-binding protein of Chlorobium phaeobacteroides (strain BS1).